Here is a 251-residue protein sequence, read N- to C-terminus: Large ribosomal subunit protein uL3 (251 aa).

Q151 bears the N5-methylglutamine mark. The segment at 221 to 251 (GLKQAANSNDSAAADTPAEVAAVEATEGQEG) is disordered. Over residues 225-251 (AANSNDSAAADTPAEVAAVEATEGQEG) the composition is skewed to low complexity.

It belongs to the universal ribosomal protein uL3 family. As to quaternary structure, part of the 50S ribosomal subunit. Forms a cluster with proteins L14 and L19. Methylated by PrmB.

Its function is as follows. One of the primary rRNA binding proteins, it binds directly near the 3'-end of the 23S rRNA, where it nucleates assembly of the 50S subunit. This is Large ribosomal subunit protein uL3 from Novosphingobium aromaticivorans (strain ATCC 700278 / DSM 12444 / CCUG 56034 / CIP 105152 / NBRC 16084 / F199).